A 185-amino-acid polypeptide reads, in one-letter code: Elongation factor P (185 aa).

This sequence belongs to the elongation factor P family.

Its subcellular location is the cytoplasm. It participates in protein biosynthesis; polypeptide chain elongation. Functionally, involved in peptide bond synthesis. Stimulates efficient translation and peptide-bond synthesis on native or reconstituted 70S ribosomes in vitro. Probably functions indirectly by altering the affinity of the ribosome for aminoacyl-tRNA, thus increasing their reactivity as acceptors for peptidyl transferase. The protein is Elongation factor P of Bacillus pumilus (strain SAFR-032).